Reading from the N-terminus, the 373-residue chain is DNA replication and repair protein RecF (373 aa).

30–37 (GPNGQGKT) serves as a coordination point for ATP.

Belongs to the RecF family.

Its subcellular location is the cytoplasm. Its function is as follows. The RecF protein is involved in DNA metabolism; it is required for DNA replication and normal SOS inducibility. RecF binds preferentially to single-stranded, linear DNA. It also seems to bind ATP. The protein is DNA replication and repair protein RecF of Streptomyces avermitilis (strain ATCC 31267 / DSM 46492 / JCM 5070 / NBRC 14893 / NCIMB 12804 / NRRL 8165 / MA-4680).